The following is a 177-amino-acid chain: NAD(P)H-quinone oxidoreductase subunit 6, chloroplastic (177 aa).

Transmembrane regions (helical) follow at residues 10–30 (VLLV…VLLT), 32–52 (PIYS…FYIL), 61–81 (AQLL…VMFM), 90–112 (FYLW…FSLI), and 152–172 (FYLP…GAIT).

The protein belongs to the complex I subunit 6 family. NDH is composed of at least 16 different subunits, 5 of which are encoded in the nucleus.

The protein localises to the plastid. It localises to the chloroplast thylakoid membrane. The enzyme catalyses a plastoquinone + NADH + (n+1) H(+)(in) = a plastoquinol + NAD(+) + n H(+)(out). It catalyses the reaction a plastoquinone + NADPH + (n+1) H(+)(in) = a plastoquinol + NADP(+) + n H(+)(out). NDH shuttles electrons from NAD(P)H:plastoquinone, via FMN and iron-sulfur (Fe-S) centers, to quinones in the photosynthetic chain and possibly in a chloroplast respiratory chain. The immediate electron acceptor for the enzyme in this species is believed to be plastoquinone. Couples the redox reaction to proton translocation, and thus conserves the redox energy in a proton gradient. The chain is NAD(P)H-quinone oxidoreductase subunit 6, chloroplastic (ndhG) from Acorus calamus var. americanus (American sweet flag).